A 264-amino-acid chain; its full sequence is 2',3'-cyclic-nucleotide 2'-phosphodiesterase (264 aa).

Fe cation contacts are provided by aspartate 8, glutamate 39, asparagine 40, and asparagine 67. The active-site Proton donor is the histidine 68. Residues histidine 150, histidine 175, and histidine 177 each coordinate Fe cation.

This sequence belongs to the YmdB-like family. In terms of assembly, homodimer. The cofactor is Fe(2+). It depends on Fe(3+) as a cofactor.

The protein resides in the cytoplasm. It catalyses the reaction a nucleoside 2',3'-cyclic phosphate + H2O = a nucleoside 3'-phosphate + H(+). In terms of biological role, plays a central, regulatory role in the late adaptive responses and affects the levels of many genes. May act via regulation of cAMP levels. Decreases the expression of motility genes and induces genes involved in biofilm formation, by controlling the expression of SlrR. Required for formation of intercellular nanotubes that bridge neighboring cells to allow molecular exchange. Plays a key role in directing the early stages of colony development. In vitro, has a metal-dependent phosphodiesterase activity against 2',3'-cAMP and 2',3'-cGMP. Also has 3',5'-cyclic-nucleotide phosphodiesterase activity, but cannot use cyclic di-AMP or cyclic di-GMP, and does not have phosphatase activity. This is 2',3'-cyclic-nucleotide 2'-phosphodiesterase (ymdB) from Bacillus subtilis (strain 168).